Reading from the N-terminus, the 370-residue chain is Chloromuconate cycloisomerase (370 aa).

Residue K165 is the Proton acceptor of the active site. Mn(2+) is bound by residues D194, E220, and D245. E323 serves as the catalytic Proton donor.

Belongs to the mandelate racemase/muconate lactonizing enzyme family. Mn(2+) is required as a cofactor.

It carries out the reaction 2-[(2R)-2-chloro-2,5-dihydro-5-oxofuryl]acetate = 3-chloro-cis,cis-muconate + H(+). It participates in aromatic compound metabolism; 3-chlorocatechol degradation. This is Chloromuconate cycloisomerase (tfdD) from Delftia acidovorans (Pseudomonas acidovorans).